Reading from the N-terminus, the 346-residue chain is Uricase (346 aa).

Residues M1 to G23 form a disordered region. Residues K39 and T84 each act as charge relay system in the active site. Urate-binding residues include T84, D85, F208, R225, V273, Q274, and N300. H302 functions as the Charge relay system in the catalytic mechanism. The Microbody targeting signal signature appears at S344–L346.

It belongs to the uricase family. As to expression, malpighian tubules.

Its subcellular location is the peroxisome. The enzyme catalyses urate + O2 + H2O = 5-hydroxyisourate + H2O2. It participates in purine metabolism; urate degradation; (S)-allantoin from urate: step 1/3. Its activity is regulated as follows. Repressed by 20-hydroxyecdysone. Functionally, catalyzes the oxidation of uric acid to 5-hydroxyisourate, which is further processed to form (S)-allantoin. The protein is Uricase (Uro) of Drosophila pseudoobscura pseudoobscura (Fruit fly).